A 307-amino-acid polypeptide reads, in one-letter code: MVSSKQTQLKKGKQPSWIEMYLPKEVRPYAHLARLDKPIGSWLLAWPAFWSVALAADLESLPKMLAIFGWWAVWIRGAGCTINDYFDRNFDKKVERTKSRPLASGAVSPAQGLWWLAFQLFIGLGVLYQFNVLTLALAIVHVPFVFAYPLMKRITYWPQAFLGVMISWGALLGSSALKGSVVPSIAYPLYISSFFWTLVYDTIYAHQDKVDDAKAGIKSTALRFGDATKMWISWFGVGCIAALVIGGLILNIGLPYYVFVAIATGQLVWQIFTVDLLSPLDCGKKFVSNQWFGAIIFTGILLGRLFP.

8 consecutive transmembrane segments (helical) span residues 38–58 (PIGS…AADL), 62–82 (PKML…GCTI), 120–140 (LFIG…LAIV), 154–174 (ITYW…LLGS), 179–199 (GSVV…WTLV), 230–250 (MWIS…GLIL), 252–272 (IGLP…WQIF), and 286–306 (FVSN…GRLF).

Belongs to the UbiA prenyltransferase family. Requires Mg(2+) as cofactor. In terms of tissue distribution, expressed only in roots.

It localises to the endoplasmic reticulum membrane. The enzyme catalyses 4-hydroxybenzoate + (2E)-geranyl diphosphate = 3-geranyl-4-hydroxybenzoate + diphosphate. In terms of biological role, prenyltransferase involved in the biosynthesis of shikonin, a naphthoquinone secondary metabolite. Could accept only geranyl diphosphate and not dimethylallyl diphosphate, farnesyl diphosphate, or geranylgeranyl diphosphate as substrate. The sequence is that of 4-hydroxybenzoate geranyltransferase 1 (PGT-1) from Lithospermum erythrorhizon (Purple gromwell).